Here is a 1431-residue protein sequence, read N- to C-terminus: DNA polymerase II large subunit (1431 aa).

The tract at residues 1388-1431 (LLENFANGYNKGKKEEMPKKQRKKEQEKSKKRKVISLDDFFSRK) is disordered. Residues 1399–1415 (GKKEEMPKKQRKKEQEK) are compositionally biased toward basic and acidic residues.

This sequence belongs to the archaeal DNA polymerase II family. As to quaternary structure, heterodimer of a large subunit and a small subunit. In terms of processing, this protein undergoes a protein self splicing that involves a post-translational excision of the intervening region (intein) followed by peptide ligation.

It catalyses the reaction DNA(n) + a 2'-deoxyribonucleoside 5'-triphosphate = DNA(n+1) + diphosphate. The enzyme catalyses Exonucleolytic cleavage in the 3'- to 5'-direction to yield nucleoside 5'-phosphates.. Its function is as follows. Possesses two activities: a DNA synthesis (polymerase) and an exonucleolytic activity that degrades single-stranded DNA in the 3'- to 5'-direction. Has a template-primer preference which is characteristic of a replicative DNA polymerase. The chain is DNA polymerase II large subunit (polC) from Pyrococcus horikoshii (strain ATCC 700860 / DSM 12428 / JCM 9974 / NBRC 100139 / OT-3).